A 307-amino-acid polypeptide reads, in one-letter code: tRNA pseudouridine synthase B (307 aa).

D47 functions as the Nucleophile in the catalytic mechanism.

This sequence belongs to the pseudouridine synthase TruB family. Type 1 subfamily.

The enzyme catalyses uridine(55) in tRNA = pseudouridine(55) in tRNA. In terms of biological role, responsible for synthesis of pseudouridine from uracil-55 in the psi GC loop of transfer RNAs. The chain is tRNA pseudouridine synthase B from Chromohalobacter salexigens (strain ATCC BAA-138 / DSM 3043 / CIP 106854 / NCIMB 13768 / 1H11).